The sequence spans 290 residues: 6-carboxyhexanoate--CoA ligase (290 aa).

Belongs to the BioW family. Homodimer. It depends on Mg(2+) as a cofactor.

It carries out the reaction heptanedioate + ATP + CoA = 6-carboxyhexanoyl-CoA + AMP + diphosphate. Its pathway is metabolic intermediate metabolism; pimeloyl-CoA biosynthesis; pimeloyl-CoA from pimelate: step 1/1. Functionally, catalyzes the transformation of pimelate into pimeloyl-CoA with concomitant hydrolysis of ATP to AMP. The chain is 6-carboxyhexanoate--CoA ligase from Bacillus amyloliquefaciens (Bacillus velezensis).